We begin with the raw amino-acid sequence, 183 residues long: Ribosome-binding factor A (183 aa).

The interval 132–183 is disordered; the sequence is PAGEADPYRDNGSVAQSPAPGGLGIRTSDGPEAVEAPLTCGGDTGDDDRPKE.

It belongs to the RbfA family. In terms of assembly, monomer. Binds 30S ribosomal subunits, but not 50S ribosomal subunits or 70S ribosomes.

Its subcellular location is the cytoplasm. One of several proteins that assist in the late maturation steps of the functional core of the 30S ribosomal subunit. Associates with free 30S ribosomal subunits (but not with 30S subunits that are part of 70S ribosomes or polysomes). Required for efficient processing of 16S rRNA. May interact with the 5'-terminal helix region of 16S rRNA. This Mycobacterium tuberculosis (strain ATCC 25177 / H37Ra) protein is Ribosome-binding factor A.